The primary structure comprises 711 residues: Protein ACTIVITY OF BC1 COMPLEX KINASE 3, chloroplastic (711 aa).

Residues 1-42 (MSLVVGQSLGLTLVGDGLSLRNSKINVGKSKFFSVNRRRLAR) constitute a chloroplast transit peptide. Positions 216–546 (SVSPEPIAAA…IELLFKDGKF (331 aa)) constitute a Protein kinase domain. ATP is bound by residues 222 to 230 (IAAASLGQV) and Lys-245. The Proton acceptor role is filled by Asp-379.

Belongs to the protein kinase superfamily. ADCK protein kinase family. Interacts with ABC1K1 in plastoglobules (PG). Interacts with PGM48.

The protein localises to the plastid. The protein resides in the chloroplast. Its subcellular location is the plastoglobule. It carries out the reaction L-seryl-[protein] + ATP = O-phospho-L-seryl-[protein] + ADP + H(+). The enzyme catalyses L-threonyl-[protein] + ATP = O-phospho-L-threonyl-[protein] + ADP + H(+). Functionally, kinase that can phosphorylate the tocopherol cyclase VTE1, a key enzyme of tocopherol (vitamin E) metabolism and involved in the recycling of oxidated alpha-tocopherol quinone, possibly stabilizing it at plastoglobules. Also regulates membrane prenylquinone composition. Required for photooxidative stress responses to prevent photosystem II core and chlorophyll degradations. Together with ABC1K1, contributes to plastoglobule (PG) function in prenyl-lipid metabolism, stress response, and thylakoid remodeling. Promotes photodamage of chloroplasts under continuous red light, thus working in opposition to ABC1K1. This Arabidopsis thaliana (Mouse-ear cress) protein is Protein ACTIVITY OF BC1 COMPLEX KINASE 3, chloroplastic.